Here is a 116-residue protein sequence, read N- to C-terminus: Large ribosomal subunit protein eL31 (116 aa).

Belongs to the eukaryotic ribosomal protein eL31 family.

In Chlamydomonas reinhardtii (Chlamydomonas smithii), this protein is Large ribosomal subunit protein eL31 (RPL31).